The chain runs to 282 residues: Pantothenate synthetase (282 aa).

Residue M26–H33 participates in ATP binding. H33 serves as the catalytic Proton donor. Q57 provides a ligand contact to (R)-pantoate. Residue Q57 participates in beta-alanine binding. G144–D147 is a binding site for ATP. Q150 lines the (R)-pantoate pocket. ATP-binding positions include L173 and L181 to R184.

The protein belongs to the pantothenate synthetase family. Homodimer.

The protein resides in the cytoplasm. The catalysed reaction is (R)-pantoate + beta-alanine + ATP = (R)-pantothenate + AMP + diphosphate + H(+). It participates in cofactor biosynthesis; (R)-pantothenate biosynthesis; (R)-pantothenate from (R)-pantoate and beta-alanine: step 1/1. Its function is as follows. Catalyzes the condensation of pantoate with beta-alanine in an ATP-dependent reaction via a pantoyl-adenylate intermediate. In Albidiferax ferrireducens (strain ATCC BAA-621 / DSM 15236 / T118) (Rhodoferax ferrireducens), this protein is Pantothenate synthetase.